Reading from the N-terminus, the 188-residue chain is Elongation factor P (188 aa).

The protein belongs to the elongation factor P family.

The protein localises to the cytoplasm. It participates in protein biosynthesis; polypeptide chain elongation. Functionally, involved in peptide bond synthesis. Stimulates efficient translation and peptide-bond synthesis on native or reconstituted 70S ribosomes in vitro. Probably functions indirectly by altering the affinity of the ribosome for aminoacyl-tRNA, thus increasing their reactivity as acceptors for peptidyl transferase. This Rickettsia canadensis (strain McKiel) protein is Elongation factor P.